The chain runs to 258 residues: Acetylglutamate kinase (258 aa).

Substrate is bound by residues 41-42, R63, and N156; that span reads GG.

Belongs to the acetylglutamate kinase family. ArgB subfamily.

The protein resides in the cytoplasm. It catalyses the reaction N-acetyl-L-glutamate + ATP = N-acetyl-L-glutamyl 5-phosphate + ADP. Its pathway is amino-acid biosynthesis; L-arginine biosynthesis; N(2)-acetyl-L-ornithine from L-glutamate: step 2/4. Functionally, catalyzes the ATP-dependent phosphorylation of N-acetyl-L-glutamate. The protein is Acetylglutamate kinase of Geobacillus kaustophilus (strain HTA426).